Consider the following 547-residue polypeptide: Chaperonin GroEL (547 aa).

Residues threonine 30–proline 33, lysine 51, aspartate 87–threonine 91, glycine 415, and aspartate 496 each bind ATP.

It belongs to the chaperonin (HSP60) family. Forms a cylinder of 14 subunits composed of two heptameric rings stacked back-to-back. Interacts with the co-chaperonin GroES.

The protein localises to the cytoplasm. The catalysed reaction is ATP + H2O + a folded polypeptide = ADP + phosphate + an unfolded polypeptide.. Its function is as follows. Together with its co-chaperonin GroES, plays an essential role in assisting protein folding. The GroEL-GroES system forms a nano-cage that allows encapsulation of the non-native substrate proteins and provides a physical environment optimized to promote and accelerate protein folding. The sequence is that of Chaperonin GroEL from Actinobacillus succinogenes (strain ATCC 55618 / DSM 22257 / CCUG 43843 / 130Z).